Consider the following 3707-residue polypeptide: CUB and sushi domain-containing protein 3 (3707 aa).

Basic and acidic residues predominate over residues Met-1 to Thr-21. The disordered stretch occupies residues Met-1 to Arg-22. Residues Met-1–Ser-42 lie on the Cytoplasmic side of the membrane. The chain crosses the membrane as a helical span at residues Gly-43 to Tyr-63. The Extracellular segment spans residues Thr-64–Ser-3630. Intrachain disulfides connect Cys-65–Cys-91, Cys-178–Cys-218, Cys-204–Cys-235, and Cys-241–Cys-267. The CUB 1 domain maps to Cys-65–Leu-173. N-linked (GlcNAc...) asparagine glycans are attached at residues Asn-73 and Asn-90. The Sushi 1 domain maps to Ser-176–Ala-237. The CUB 2 domain maps to Cys-241–Ser-345. The tract at residues His-388–Arg-437 is disordered. Polar residues predominate over residues Pro-411–Ser-426. The Sushi 2 domain maps to Asn-484–Val-545. 6 disulfides stabilise this stretch: Cys-486-Cys-526, Cys-512-Cys-543, Cys-548-Cys-574, Cys-664-Cys-704, Cys-690-Cys-717, and Cys-721-Cys-747. One can recognise a CUB 3 domain in the interval Cys-548–Ile-659. Residues Glu-662–Phe-719 enclose the Sushi 3 domain. The CUB 4 domain maps to Cys-721–Phe-829. Asn-724 and Asn-823 each carry an N-linked (GlcNAc...) asparagine glycan. In terms of domain architecture, Sushi 4 spans Asn-832–Ala-893. 3 disulfides stabilise this stretch: Cys-834–Cys-875, Cys-860–Cys-891, and Cys-895–Cys-921. The 109-residue stretch at Cys-895 to Val-1003 folds into the CUB 5 domain. An N-linked (GlcNAc...) asparagine glycan is attached at Asn-966. Positions Tyr-1008–Ala-1065 constitute a Sushi 5 domain. Intrachain disulfides connect Cys-1010–Cys-1050, Cys-1036–Cys-1063, and Cys-1067–Cys-1093. The 111-residue stretch at Cys-1067–Tyr-1177 folds into the CUB 6 domain. 3 N-linked (GlcNAc...) asparagine glycosylation sites follow: Asn-1092, Asn-1126, and Asn-1171. Residues Glu-1180 to Ala-1239 form the Sushi 6 domain. Intrachain disulfides connect Cys-1182-Cys-1222, Cys-1208-Cys-1237, and Cys-1241-Cys-1267. The CUB 7 domain occupies Cys-1241 to Phe-1349. N-linked (GlcNAc...) asparagine glycosylation is present at Asn-1280. Residues Ser-1352–Ala-1412 enclose the Sushi 7 domain. Cystine bridges form between Cys-1354-Cys-1395, Cys-1381-Cys-1410, Cys-1414-Cys-1441, Cys-1528-Cys-1568, Cys-1554-Cys-1584, Cys-1588-Cys-1614, Cys-1701-Cys-1741, Cys-1727-Cys-1758, Cys-1762-Cys-1788, Cys-1878-Cys-1918, Cys-1904-Cys-1935, and Cys-1939-Cys-1965. Residues Cys-1414–Ser-1523 enclose the CUB 8 domain. Residues Thr-1526–Ala-1586 form the Sushi 8 domain. An N-linked (GlcNAc...) asparagine glycan is attached at Asn-1536. The region spanning Cys-1588–Lys-1696 is the CUB 9 domain. Asn-1591 and Asn-1709 each carry an N-linked (GlcNAc...) asparagine glycan. The 62-residue stretch at Glu-1699 to Ala-1760 folds into the Sushi 9 domain. The CUB 10 domain occupies Cys-1762–Val-1870. N-linked (GlcNAc...) asparagine glycosylation is present at Asn-1781. The region spanning Thr-1876–Val-1937 is the Sushi 10 domain. An N-linked (GlcNAc...) asparagine glycan is attached at Asn-1929. The 109-residue stretch at Cys-1939–Ile-2047 folds into the CUB 11 domain. Asn-2019 carries N-linked (GlcNAc...) asparagine glycosylation. Positions Asp-2050–Ala-2109 constitute a Sushi 11 domain. Intrachain disulfides connect Cys-2052–Cys-2092, Cys-2078–Cys-2107, and Cys-2111–Cys-2137. In terms of domain architecture, CUB 12 spans Cys-2111–Tyr-2219. Residue Asn-2155 is glycosylated (N-linked (GlcNAc...) asparagine). A Sushi 12 domain is found at Gln-2222–Ala-2281. Intrachain disulfides connect Cys-2224/Cys-2264, Cys-2250/Cys-2279, Cys-2283/Cys-2309, Cys-2395/Cys-2437, Cys-2423/Cys-2452, Cys-2456/Cys-2484, Cys-2569/Cys-2610, Cys-2596/Cys-2627, Cys-2632/Cys-2674, Cys-2658/Cys-2689, Cys-2694/Cys-2739, Cys-2725/Cys-2754, Cys-2759/Cys-2799, Cys-2785/Cys-2812, Cys-2817/Cys-2857, Cys-2843/Cys-2870, Cys-2875/Cys-2915, Cys-2901/Cys-2928, Cys-2933/Cys-2977, Cys-2963/Cys-2990, Cys-2995/Cys-3035, Cys-3021/Cys-3048, Cys-3056/Cys-3096, Cys-3082/Cys-3109, Cys-3114/Cys-3155, Cys-3141/Cys-3168, Cys-3173/Cys-3215, Cys-3199/Cys-3228, Cys-3233/Cys-3273, Cys-3259/Cys-3286, Cys-3291/Cys-3331, Cys-3317/Cys-3344, Cys-3352/Cys-3393, Cys-3379/Cys-3406, Cys-3411/Cys-3453, and Cys-3438/Cys-3466. Residues Cys-2283–Val-2394 enclose the CUB 13 domain. N-linked (GlcNAc...) asparagine glycosylation is found at Asn-2286 and Asn-2291. A Sushi 13 domain is found at Arg-2393–Val-2454. Residues Cys-2456 to Phe-2567 enclose the CUB 14 domain. 15 consecutive Sushi domains span residues Phe-2567–Ala-2629, Ile-2630–Val-2691, Val-2692–Ile-2756, Ile-2757–Ala-2814, Gly-2815–Pro-2872, Val-2873–Val-2930, Val-2931–Met-2992, Ile-2993–Gly-3050, Gly-3054–Ala-3111, Val-3112–Ile-3170, Ile-3171–Ala-3230, Val-3231–Pro-3288, Lys-3289–Glu-3346, Thr-3350–Pro-3408, and His-3409–Ala-3468. Residues Thr-3052 to Gly-3065 show a composition bias toward low complexity. The segment at Thr-3052–Asp-3071 is disordered. The helical transmembrane segment at Val-3631 to Leu-3651 threads the bilayer. Residues Tyr-3652 to Val-3707 lie on the Cytoplasmic side of the membrane.

This sequence belongs to the CSMD family. Expressed in the apical dendrites of postnatal hippocampal neurons (at protein level).

The protein localises to the cell membrane. Involved in dendrite development. In Mus musculus (Mouse), this protein is CUB and sushi domain-containing protein 3 (Csmd3).